We begin with the raw amino-acid sequence, 154 residues long: Basic phospholipase A2 PC20 (154 aa).

The first 21 residues, 1–21 (MYPAHLLVLLAVCVSLLGASA), serve as a signal peptide directing secretion. Positions 22-27 (ISPRPL) are excised as a propeptide. Disulfide bonds link Cys38–Cys98, Cys54–Cys143, Cys56–Cys72, Cys71–Cys125, Cys78–Cys118, Cys87–Cys111, and Cys105–Cys116. Positions 55, 57, and 59 each coordinate Ca(2+). Residue His75 is part of the active site. Asp76 provides a ligand contact to Ca(2+). Asp119 is a catalytic residue.

Belongs to the phospholipase A2 family. Group I subfamily. D49 sub-subfamily. It depends on Ca(2+) as a cofactor. In terms of tissue distribution, expressed by the venom gland.

It is found in the secreted. It catalyses the reaction a 1,2-diacyl-sn-glycero-3-phosphocholine + H2O = a 1-acyl-sn-glycero-3-phosphocholine + a fatty acid + H(+). Functionally, snake venom phospholipase A2 (PLA2) that inhibits neuromuscular transmission by blocking acetylcholine release from the nerve termini. PLA2 catalyzes the calcium-dependent hydrolysis of the 2-acyl groups in 3-sn-phosphoglycerides. In Laticauda colubrina (Yellow-lipped sea krait), this protein is Basic phospholipase A2 PC20.